The sequence spans 832 residues: Serine/threonine-protein kinase Doa (832 aa).

4 disordered regions span residues 1–86 (MVAA…SKYI), 135–158 (LLQHQQQQHHQQQQQQHQEQQQYP), 179–215 (SDPFMQQQHMPAHQQQQHLPHKLQQSYSSSHVPKQAP), and 258–419 (SKIG…QLQQ). A compositionally biased stretch (polar residues) spans 8–18 (VPTSSSSSAAT). A compositionally biased stretch (basic and acidic residues) spans 20-32 (RQKDVDNKLEKCL). 3 stretches are compositionally biased toward low complexity: residues 40-53 (TSSNNNSTSNSNNN), 137-158 (QHQQQQHHQQQQQQHQEQQQYP), and 183-203 (MQQQHMPAHQQQQHLPHKLQQ). Residues 271–282 (HSASFSSAQRPT) show a composition bias toward polar residues. 3 stretches are compositionally biased toward low complexity: residues 285–310 (QFHQQHQQQQHLQQQQQHPQQQQHQH), 347–365 (QMQPVKYQQQQQHPHTQFQ), and 396–419 (SSSSNKQPQQPQQQQQQQQSQLQQ). One can recognise a Protein kinase domain in the interval 479-799 (YKIMATLGEG…LGEALHHPFF (321 aa)). ATP is bound by residues 485 to 493 (LGEGTFGRV) and lysine 508. Aspartate 605 functions as the Proton acceptor in the catalytic mechanism. Residues 809-832 (GEVSNKQPLSSGSSSRERSHSLSR) form a disordered region. Over residues 823 to 832 (SRERSHSLSR) the composition is skewed to basic and acidic residues.

Belongs to the protein kinase superfamily. CMGC Ser/Thr protein kinase family. Lammer subfamily. Interacts (via N-terminus) with x16 (via Arg/Ser-rich region). Interacts with eEF1gamma (via C-terminus); the interaction is probably direct, is transient and leads to phosphorylation of eEF1gamma by Doa. Mg(2+) serves as cofactor. Post-translationally, autophosphorylated on serine, threonine and tyrosine residues. As to expression, ubiquitous expression in embryos. Stage 17 embryos show elevated expression in CNS and brain. Ubiquitous expression in larval imaginal disks. Increased expression posterior to the eye-antennal disk morphogenetic furrow.

It is found in the cytoplasm. It localises to the cytosol. The protein localises to the nucleus. It carries out the reaction L-seryl-[protein] + ATP = O-phospho-L-seryl-[protein] + ADP + H(+). The enzyme catalyses L-threonyl-[protein] + ATP = O-phospho-L-threonyl-[protein] + ADP + H(+). It catalyses the reaction L-tyrosyl-[protein] + ATP = O-phospho-L-tyrosyl-[protein] + ADP + H(+). Its function is as follows. Dual specificity kinase involved in the negative regulation of microtubule-based transport through phsophorylation of the microtuble-binding protein eEF1gamma. May function in the control of alternative splicing by phosphorylating serine/arginine-rich splicing factors, the SR proteins, including x16. Negative regulator of the copia retrotransposon element of the white (w) gene. In the eye, it is required for normal pigmentation, photoreceptor cell development and for organization of interommatidial bristles. Also essential for embryonic segmentation and differentiation of the nervous system. Functionally, may be the specific isoform involved in regulation of microtubule-based transport through phosphorylation of the microtubule binding protein eEF1gamma. In Drosophila melanogaster (Fruit fly), this protein is Serine/threonine-protein kinase Doa.